The chain runs to 178 residues: Adenine phosphoribosyltransferase (178 aa).

Belongs to the purine/pyrimidine phosphoribosyltransferase family. As to quaternary structure, homodimer.

Its subcellular location is the cytoplasm. It carries out the reaction AMP + diphosphate = 5-phospho-alpha-D-ribose 1-diphosphate + adenine. The protein operates within purine metabolism; AMP biosynthesis via salvage pathway; AMP from adenine: step 1/1. Functionally, catalyzes a salvage reaction resulting in the formation of AMP, that is energically less costly than de novo synthesis. The chain is Adenine phosphoribosyltransferase from Streptomyces clavuligerus.